The sequence spans 130 residues: ATP synthase epsilon chain, chloroplastic (130 aa).

The protein belongs to the ATPase epsilon chain family. In terms of assembly, F-type ATPases have 2 components, CF(1) - the catalytic core - and CF(0) - the membrane proton channel. CF(1) has five subunits: alpha(3), beta(3), gamma(1), delta(1), epsilon(1). CF(0) has three main subunits: a, b and c.

Its subcellular location is the plastid. The protein resides in the chloroplast thylakoid membrane. In terms of biological role, produces ATP from ADP in the presence of a proton gradient across the membrane. This chain is ATP synthase epsilon chain, chloroplastic, found in Emiliania huxleyi (Coccolithophore).